A 117-amino-acid polypeptide reads, in one-letter code: Basic phospholipase A2 pseudexin B chain (117 aa).

Disulfide bonds link C11/C71, C27/C117, C29/C45, C44/C98, C51/C91, C60/C84, and C78/C89. Y28, G30, and G32 together coordinate Ca(2+). H48 is an active-site residue. A Ca(2+)-binding site is contributed by D49. D92 is an active-site residue.

The protein belongs to the phospholipase A2 family. Group I subfamily. D49 sub-subfamily. Ca(2+) serves as cofactor. In terms of tissue distribution, expressed by the venom gland.

It is found in the secreted. It catalyses the reaction a 1,2-diacyl-sn-glycero-3-phosphocholine + H2O = a 1-acyl-sn-glycero-3-phosphocholine + a fatty acid + H(+). PLA2 catalyzes the calcium-dependent hydrolysis of the 2-acyl groups in 3-sn-phosphoglycerides. This chain is Basic phospholipase A2 pseudexin B chain, found in Pseudechis porphyriacus (Red-bellied black snake).